Here is a 78-residue protein sequence, read N- to C-terminus: Putative protein PeaD (78 aa).

This sequence belongs to the phage P protein family.

The polypeptide is Putative protein PeaD (peaD) (Escherichia coli (strain K12)).